The chain runs to 284 residues: Bifunctional protein FolD (284 aa).

NADP(+)-binding positions include 165-167 (GRG), threonine 192, and valine 233.

Belongs to the tetrahydrofolate dehydrogenase/cyclohydrolase family. In terms of assembly, homodimer.

It catalyses the reaction (6R)-5,10-methylene-5,6,7,8-tetrahydrofolate + NADP(+) = (6R)-5,10-methenyltetrahydrofolate + NADPH. It carries out the reaction (6R)-5,10-methenyltetrahydrofolate + H2O = (6R)-10-formyltetrahydrofolate + H(+). It functions in the pathway one-carbon metabolism; tetrahydrofolate interconversion. Functionally, catalyzes the oxidation of 5,10-methylenetetrahydrofolate to 5,10-methenyltetrahydrofolate and then the hydrolysis of 5,10-methenyltetrahydrofolate to 10-formyltetrahydrofolate. The polypeptide is Bifunctional protein FolD (Corynebacterium glutamicum (strain R)).